The sequence spans 348 residues: GTP 3',8-cyclase (348 aa).

One can recognise a Radical SAM core domain in the interval 24-242; that stretch reads PFGRAVTYLR…EKQFTLTDID (219 aa). Residue Arg33 participates in GTP binding. 2 residues coordinate [4Fe-4S] cluster: Cys40 and Cys44. Residue Tyr46 coordinates S-adenosyl-L-methionine. Cys47 contacts [4Fe-4S] cluster. Arg82 is a GTP binding site. An S-adenosyl-L-methionine-binding site is contributed by Gly86. Residue Thr115 coordinates GTP. Residue Ser139 coordinates S-adenosyl-L-methionine. Lys175 provides a ligand contact to GTP. S-adenosyl-L-methionine is bound at residue Met209. 2 residues coordinate [4Fe-4S] cluster: Cys272 and Cys275. 277-279 contacts GTP; the sequence is RVR. Cys289 provides a ligand contact to [4Fe-4S] cluster.

The protein belongs to the radical SAM superfamily. MoaA family. Monomer and homodimer. Requires [4Fe-4S] cluster as cofactor.

It catalyses the reaction GTP + AH2 + S-adenosyl-L-methionine = (8S)-3',8-cyclo-7,8-dihydroguanosine 5'-triphosphate + 5'-deoxyadenosine + L-methionine + A + H(+). Its pathway is cofactor biosynthesis; molybdopterin biosynthesis. In terms of biological role, catalyzes the cyclization of GTP to (8S)-3',8-cyclo-7,8-dihydroguanosine 5'-triphosphate. In Rhizobium leguminosarum bv. trifolii (strain WSM2304), this protein is GTP 3',8-cyclase.